The primary structure comprises 571 residues: Urease subunit alpha (571 aa).

Residues 133-571 enclose the Urease domain; that stretch reads GGIDTHVHFI…LPLTQRYFLF (439 aa). Histidine 138, histidine 140, and lysine 221 together coordinate Ni(2+). Position 221 is an N6-carboxylysine (lysine 221). Histidine 223 lines the substrate pocket. Ni(2+) contacts are provided by histidine 250 and histidine 276. Residue histidine 324 is the Proton donor of the active site. Aspartate 364 lines the Ni(2+) pocket.

Belongs to the metallo-dependent hydrolases superfamily. Urease alpha subunit family. In terms of assembly, heterotrimer of UreA (gamma), UreB (beta) and UreC (alpha) subunits. Three heterotrimers associate to form the active enzyme. Ni cation serves as cofactor. Carboxylation allows a single lysine to coordinate two nickel ions.

The protein resides in the cytoplasm. It catalyses the reaction urea + 2 H2O + H(+) = hydrogencarbonate + 2 NH4(+). It functions in the pathway nitrogen metabolism; urea degradation; CO(2) and NH(3) from urea (urease route): step 1/1. This is Urease subunit alpha from Staphylococcus aureus (strain MRSA252).